The following is a 478-amino-acid chain: Metalloendopeptidase OMA1, mitochondrial (478 aa).

The stress-sensor region stretch occupies residues 134–164; that stretch reads LGRSIRKWWVALPANKKQLFREWSWRRRWHF. The chain crosses the membrane as a helical span at residues 163 to 183; it reads HFLGAGTGLLFIASLFFFTHL. H296 is a Zn(2+) binding site. The active site involves E297. Zn(2+) contacts are provided by H300 and E361. The cysteines at positions 376 and 434 are disulfide-linked.

It belongs to the peptidase M48 family. As to quaternary structure, homooligomer. Zn(2+) is required as a cofactor. Autocatalytically cleaved in response to mitochondrial depolarization both at the N-terminus and C-terminus to generate the short active form (S-OMA1). The S-OMA1 form is unstable. In terms of processing, may form a redox-dependent disulfide bond. Exists in a semi-oxidized state and is activated by prolonged hypoxia.

It localises to the mitochondrion inner membrane. Protease activity is activated upon autocatalytic cleavage in response to mitochondrial depolarization. In terms of biological role, metalloprotease that is part of the quality control system in the inner membrane of mitochondria. Activated in response to various mitochondrial stress, leading to the proteolytic cleavage of target proteins, such as opa1 and dele1. Involved in the fusion of the mitochondrial inner membranes by mediating cleavage of opa1 at S1 position, generating the soluble opa1 (S-opa1), which cooperates with the membrane form (L-opa1) to coordinate the fusion of mitochondrial inner membranes. Following stress conditions that induce loss of mitochondrial membrane potential, mediates cleavage of opa1, leading to excess production of soluble opa1 (S-opa1) and negative regulation of mitochondrial fusion. Also acts as an activator of the integrated stress response (ISR): in response to mitochondrial stress, mediates cleavage of dele1 to generate the processed form of dele1 (S-DELE1), which translocates to the cytosol and activates eif2ak1/hri to trigger the ISR. Required for the stability of the respiratory supercomplexes. The sequence is that of Metalloendopeptidase OMA1, mitochondrial from Danio rerio (Zebrafish).